We begin with the raw amino-acid sequence, 424 residues long: MEKALLEIEEKARLARAASRPLSYASSAQKDAALKNIARCLLDNGPAILEANLKDQNEAKASGMLPAMLDRLIIDQSRLEGIAKDTFAIAALPDPVGEIFDMNTMPNGLIIGKKRVPLGVIAAIYESRPNVTVDIASLCLKAGNAVILRGGKETIHSNTILAKLIRQAVEQAGLPKEAVQFIENTDRNLVNHLLKLSDQIDLVIPRGGAGLISYVKQNSFIPVVAGGIGVVHVYVDANAKVTDAVNIAYNSKVQRPTVCNAMDTLLVHKDIAPVFLPAVAAEWSKAGVEIRADEAALKILENTFGCKLIPATPDDWGKEFLALIAAVKVVDSLDEALSHIARYGSGHTESIVTQNYTSSQRFLNEVDAAAVMVNASTRFTDGSQFGLGAELGISTQKMHARGPMGLKEITSYKWIVYGSGQIRG.

The protein belongs to the gamma-glutamyl phosphate reductase family.

It localises to the cytoplasm. The enzyme catalyses L-glutamate 5-semialdehyde + phosphate + NADP(+) = L-glutamyl 5-phosphate + NADPH + H(+). Its pathway is amino-acid biosynthesis; L-proline biosynthesis; L-glutamate 5-semialdehyde from L-glutamate: step 2/2. Functionally, catalyzes the NADPH-dependent reduction of L-glutamate 5-phosphate into L-glutamate 5-semialdehyde and phosphate. The product spontaneously undergoes cyclization to form 1-pyrroline-5-carboxylate. The protein is Gamma-glutamyl phosphate reductase of Dehalococcoides mccartyi (strain ATCC BAA-2100 / JCM 16839 / KCTC 5957 / BAV1).